The chain runs to 384 residues: Cysteine desulfurase (384 aa).

Pyridoxal 5'-phosphate-binding positions include 74–75, Asn154, Gln180, and 200–202; these read GT and SGH. Lys203 carries the N6-(pyridoxal phosphate)lysine modification. Thr238 lines the pyridoxal 5'-phosphate pocket. Catalysis depends on Cys325, which acts as the Cysteine persulfide intermediate. Residue Cys325 coordinates [2Fe-2S] cluster.

Belongs to the class-V pyridoxal-phosphate-dependent aminotransferase family. NifS/IscS subfamily. In terms of assembly, homodimer. Pyridoxal 5'-phosphate serves as cofactor.

It carries out the reaction (sulfur carrier)-H + L-cysteine = (sulfur carrier)-SH + L-alanine. Its function is as follows. Catalyzes the removal of elemental sulfur atoms from cysteine to produce alanine. Seems to participate in the biosynthesis of the nitrogenase metalloclusters by providing the inorganic sulfur required for the Fe-S core formation. The polypeptide is Cysteine desulfurase (Rhodobacter capsulatus (Rhodopseudomonas capsulata)).